A 491-amino-acid polypeptide reads, in one-letter code: Cytochrome P450 2F1 (491 aa).

Cysteine 436 lines the heme pocket.

This sequence belongs to the cytochrome P450 family. Heme serves as cofactor. As to expression, expressed in lung. Rarely detected in liver and placenta.

It localises to the endoplasmic reticulum membrane. The protein localises to the microsome membrane. It carries out the reaction an organic molecule + reduced [NADPH--hemoprotein reductase] + O2 = an alcohol + oxidized [NADPH--hemoprotein reductase] + H2O + H(+). In terms of biological role, may be involved in the metabolism of various pneumotoxicants including naphthalene. Is able to dealkylate ethoxycoumarin, propoxycoumarin, and pentoxyresorufin but possesses no activity toward ethoxyresorufin and only trace dearylation activity toward benzyloxyresorufin. Bioactivates 3-methylindole (3MI) by dehydrogenation to the putative electrophile 3-methylene-indolenine. The polypeptide is Cytochrome P450 2F1 (CYP2F1) (Homo sapiens (Human)).